A 647-amino-acid polypeptide reads, in one-letter code: Methyl-accepting chemotaxis protein McpK (647 aa).

Over Met-1–Arg-16 the chain is Cytoplasmic. A helical transmembrane segment spans residues Lys-17–Asn-37. At Arg-38 to Arg-291 the chain is on the periplasmic side. One can recognise an HBM domain in the interval Ala-45–Ala-287. A helical transmembrane segment spans residues Ala-292 to Ile-312. Topologically, residues Asn-313–Leu-647 are cytoplasmic. Residues Arg-314 to Gly-370 enclose the HAMP domain. The 237-residue stretch at Gly-375–Arg-611 folds into the Methyl-accepting transducer domain.

The protein belongs to the methyl-accepting chemotaxis (MCP) protein family. In terms of assembly, ligand free ligand-binding domain (LBD) is present in a monomer-dimer equilibrium. AlphaKG binding stabilizes the homodimer.

Its subcellular location is the cell inner membrane. Chemotactic-signal transducers respond to changes in the concentration of attractants and repellents in the environment, transduce a signal from the outside to the inside of the cell, and facilitate sensory adaptation through the variation of the level of methylation. McpK is a chemoreceptor that specifically binds and mediates chemotaxis to alpha-ketoglutarate (alphaKG). The protein is Methyl-accepting chemotaxis protein McpK of Pseudomonas aeruginosa (strain ATCC 15692 / DSM 22644 / CIP 104116 / JCM 14847 / LMG 12228 / 1C / PRS 101 / PAO1).